Consider the following 103-residue polypeptide: Seminal ribonuclease (103 aa).

4 disulfides stabilise this stretch: C12/C70, C26/C81, C44/C96, and C51/C58. Substrate is bound by residues 27 to 31 (KLVNT), K52, and R71.

The protein belongs to the pancreatic ribonuclease family. As to quaternary structure, homodimer; disulfide-linked.

The protein localises to the secreted. It carries out the reaction an [RNA] containing cytidine + H2O = an [RNA]-3'-cytidine-3'-phosphate + a 5'-hydroxy-ribonucleotide-3'-[RNA].. The catalysed reaction is an [RNA] containing uridine + H2O = an [RNA]-3'-uridine-3'-phosphate + a 5'-hydroxy-ribonucleotide-3'-[RNA].. In terms of biological role, this enzyme hydrolyzes both single- and double-stranded RNA. This chain is Seminal ribonuclease (SRN), found in Cephalophus silvicultor (Yellow-backed duiker).